Reading from the N-terminus, the 211-residue chain is Large ribosomal subunit protein eL13 (211 aa).

At Lys16 the chain carries N6-acetyllysine. Ser52, Ser77, and Ser106 each carry phosphoserine. Residues Lys123 and Lys145 each participate in a glycyl lysine isopeptide (Lys-Gly) (interchain with G-Cter in SUMO2) cross-link. Lys174 participates in a covalent cross-link: Glycyl lysine isopeptide (Lys-Gly) (interchain with G-Cter in SUMO1); alternate. Residues Lys174 and Lys177 each participate in a glycyl lysine isopeptide (Lys-Gly) (interchain with G-Cter in SUMO2); alternate cross-link. Position 177 is an N6-acetyllysine; alternate (Lys177).

This sequence belongs to the eukaryotic ribosomal protein eL13 family. In terms of assembly, component of the 60S large ribosomal subunit (LSU).

It localises to the cytoplasm. In terms of biological role, component of the ribosome, a large ribonucleoprotein complex responsible for the synthesis of proteins in the cell. The small ribosomal subunit (SSU) binds messenger RNAs (mRNAs) and translates the encoded message by selecting cognate aminoacyl-transfer RNA (tRNA) molecules. The large subunit (LSU) contains the ribosomal catalytic site termed the peptidyl transferase center (PTC), which catalyzes the formation of peptide bonds, thereby polymerizing the amino acids delivered by tRNAs into a polypeptide chain. The nascent polypeptides leave the ribosome through a tunnel in the LSU and interact with protein factors that function in enzymatic processing, targeting, and the membrane insertion of nascent chains at the exit of the ribosomal tunnel. As part of the LSU, it is probably required for its formation and the maturation of rRNAs. Plays a role in bone development. The protein is Large ribosomal subunit protein eL13 (RPL13) of Cricetulus griseus (Chinese hamster).